The following is a 372-amino-acid chain: MSLRCGDAARTLGPRVFGRYFCSPVRPLSSLPDKKKELLQNGPDLQDFVSGDLADRSTWDEYKGNLKRQKGERLRLPPWLKTEIPMGKNYNKLKNTLRNLNLHTVCEEARCPNIGECWGGGEYATATATIMLMGDTCTRGCRFCSVKTARNPPPLDASEPYNTAKAIAEWGLDYVVLTSVDRDDMPDGGAEHIAKTVSYLKERNPKILVECLTPDFRGDLKAIEKVALSGLDVYAHNVETVPELQSKVRDPRANFDQSLRVLKHAKKVQPDVISKTSIMLGLGENDEQVYATMKALREADVDCLTLGQYMQPTRRHLKVEEYITPEKFKYWEKVGNELGFHYTASGPLVRSSYKAGEFFLKNLVAKRKTKDL.

A mitochondrion-targeting transit peptide spans 1-27 (MSLRCGDAARTLGPRVFGRYFCSPVRP). [4Fe-4S] cluster is bound by residues cysteine 106, cysteine 111, cysteine 117, cysteine 137, cysteine 141, cysteine 144, and serine 352. The 220-residue stretch at 122 to 341 (EYATATATIM…EKVGNELGFH (220 aa)) folds into the Radical SAM core domain.

It belongs to the radical SAM superfamily. Lipoyl synthase family. Requires [4Fe-4S] cluster as cofactor.

It localises to the mitochondrion. The enzyme catalyses [[Fe-S] cluster scaffold protein carrying a second [4Fe-4S](2+) cluster] + N(6)-octanoyl-L-lysyl-[protein] + 2 oxidized [2Fe-2S]-[ferredoxin] + 2 S-adenosyl-L-methionine + 4 H(+) = [[Fe-S] cluster scaffold protein] + N(6)-[(R)-dihydrolipoyl]-L-lysyl-[protein] + 4 Fe(3+) + 2 hydrogen sulfide + 2 5'-deoxyadenosine + 2 L-methionine + 2 reduced [2Fe-2S]-[ferredoxin]. The protein operates within protein modification; protein lipoylation via endogenous pathway; protein N(6)-(lipoyl)lysine from octanoyl-[acyl-carrier-protein]: step 2/2. Catalyzes the radical-mediated insertion of two sulfur atoms into the C-6 and C-8 positions of the octanoyl moiety bound to the lipoyl domains of lipoate-dependent enzymes, thereby converting the octanoylated domains into lipoylated derivatives. This chain is Lipoyl synthase, mitochondrial, found in Homo sapiens (Human).